Consider the following 296-residue polypeptide: Fructose-bisphosphate aldolase class 1 (296 aa).

Glu175 serves as the catalytic Proton acceptor. Residue Lys212 is the Schiff-base intermediate with dihydroxyacetone-P of the active site.

The protein belongs to the class I fructose-bisphosphate aldolase family.

The enzyme catalyses beta-D-fructose 1,6-bisphosphate = D-glyceraldehyde 3-phosphate + dihydroxyacetone phosphate. It functions in the pathway carbohydrate degradation; glycolysis; D-glyceraldehyde 3-phosphate and glycerone phosphate from D-glucose: step 4/4. The polypeptide is Fructose-bisphosphate aldolase class 1 (Staphylococcus aureus (strain USA300)).